Reading from the N-terminus, the 271-residue chain is Formamidopyrimidine-DNA glycosylase (271 aa).

The Schiff-base intermediate with DNA role is filled by P2. E3 functions as the Proton donor in the catalytic mechanism. K57 serves as the catalytic Proton donor; for beta-elimination activity. DNA-binding residues include H90, R109, and K151. The FPG-type zinc-finger motif lies at 236 to 270; that stretch reads HVYGRGGKTCTQCGHMLSEIKLGQRATVFCSLCQQ. R260 acts as the Proton donor; for delta-elimination activity in catalysis.

The protein belongs to the FPG family. As to quaternary structure, monomer. It depends on Zn(2+) as a cofactor.

It catalyses the reaction Hydrolysis of DNA containing ring-opened 7-methylguanine residues, releasing 2,6-diamino-4-hydroxy-5-(N-methyl)formamidopyrimidine.. It carries out the reaction 2'-deoxyribonucleotide-(2'-deoxyribose 5'-phosphate)-2'-deoxyribonucleotide-DNA = a 3'-end 2'-deoxyribonucleotide-(2,3-dehydro-2,3-deoxyribose 5'-phosphate)-DNA + a 5'-end 5'-phospho-2'-deoxyribonucleoside-DNA + H(+). Involved in base excision repair of DNA damaged by oxidation or by mutagenic agents. Acts as a DNA glycosylase that recognizes and removes damaged bases. Has a preference for oxidized purines, such as 7,8-dihydro-8-oxoguanine (8-oxoG). Has AP (apurinic/apyrimidinic) lyase activity and introduces nicks in the DNA strand. Cleaves the DNA backbone by beta-delta elimination to generate a single-strand break at the site of the removed base with both 3'- and 5'-phosphates. This is Formamidopyrimidine-DNA glycosylase from Shewanella pealeana (strain ATCC 700345 / ANG-SQ1).